We begin with the raw amino-acid sequence, 499 residues long: MLHRRIHFKSQSTLDFDSVAVSISASTMKNELDKLVLNSRVSDKKTFGIQMDNFFALYRRYLLHTVKGYECDWDSIRPLGPEDMIDYGDLPLCKNAGKYLNRLAVVKLNGGMGNALGVNYPKAMIEVRDNQSFLDLSIRQIEYLNRRYDVSVPFILMNSYDTNDETCKVLRKYAGCKIDISTFEQSRYPRVFVDSQLPVPKAAPSPIEEWYPPGHGDIFDALVHSGTIERLLAQGKDYLFVSNIDNLGASVDLNILSHVIDNQIEYSMEITDKTKADIKVGILVNQDGLLRLLETNQVPEQHREEFMSDKVFKYINTNNVWLYLPAVKRVVENRELNLDIMPNIETVYYNNEPARIIEFTTAIGSAISQFKKTEGIRVSRPRFISVKNSSDLFLVRCDLYNVDHGSLKIEESRLGFPPPVVRMSNEFKDIAELFCRIPYMPSMKDLVSLSISGNVYFGRNVILKGNIVIVASENTILCIPSNAVLENCVVTGNCKIMEC.

Residues 108 to 111 (LNGG), Lys-122, Gln-185, and Gly-214 contribute to the UTP site. Residue 110–111 (GG) participates in substrate binding. Residues His-215 and 243-245 (NID) contribute to the substrate site. UTP is bound by residues Asp-245 and Lys-387.

It belongs to the UDPGP type 1 family.

Its subcellular location is the cytoplasm. It localises to the nucleus. It catalyses the reaction alpha-D-glucose 1-phosphate + UTP + H(+) = UDP-alpha-D-glucose + diphosphate. Its function is as follows. Plays a central role as a glucosyl donor in cellular metabolic pathways. This chain is Probable UTP--glucose-1-phosphate uridylyltransferase, found in Schizosaccharomyces pombe (strain 972 / ATCC 24843) (Fission yeast).